The sequence spans 868 residues: Alanine--tRNA ligase (868 aa).

Zn(2+) contacts are provided by His553, His557, Cys657, and His661. The segment at 831–851 is disordered; that stretch reads GGKGGGRADMAQAGGSRPQAL.

This sequence belongs to the class-II aminoacyl-tRNA synthetase family. The cofactor is Zn(2+).

The protein localises to the cytoplasm. The enzyme catalyses tRNA(Ala) + L-alanine + ATP = L-alanyl-tRNA(Ala) + AMP + diphosphate. In terms of biological role, catalyzes the attachment of alanine to tRNA(Ala) in a two-step reaction: alanine is first activated by ATP to form Ala-AMP and then transferred to the acceptor end of tRNA(Ala). Also edits incorrectly charged Ser-tRNA(Ala) and Gly-tRNA(Ala) via its editing domain. This Chromohalobacter salexigens (strain ATCC BAA-138 / DSM 3043 / CIP 106854 / NCIMB 13768 / 1H11) protein is Alanine--tRNA ligase.